The chain runs to 20 residues: Putative beta-neurotoxin (20 aa).

The region spanning Lys-1–Gly-20 is the LCN-type CS-alpha/beta domain.

As to expression, expressed by the venom gland.

The protein localises to the secreted. Beta toxins bind voltage-independently at site-4 of sodium channels (Nav) and shift the voltage of activation toward more negative potentials thereby affecting sodium channel activation and promoting spontaneous and repetitive firing. The sequence is that of Putative beta-neurotoxin from Tityus pachyurus (Colombian scorpion).